A 1709-amino-acid chain; its full sequence is Acrosomal protein KIAA1210 (1709 aa).

Disordered regions lie at residues 207–226, 239–275, 451–663, 763–973, 1211–1382, 1408–1516, 1539–1571, and 1589–1653; these read PVRENQPTKARAKSSMGSKA, PERSASKMFPSMDPQRGRPQQRSHISRTLPKPRSKVP, PNLD…AEKT, PPRS…MAVE, LKRG…SVNA, TKKF…GRGH, ADKQQSRPKSESMAKKQPACKTPGKPAGQQSDY, and FKAH…KSVG. Positions 257 to 272 are enriched in basic residues; sequence PQQRSHISRTLPKPRS. The span at 473–490 shows a compositional bias: basic and acidic residues; the sequence is EEEKSITKPKEINEKKLG. Composition is skewed to polar residues over residues 494–505 and 514–527; these read ADSSSQKQNNKT and DQAPNTDASRSQGY. The segment covering 595–608 has biased composition (low complexity); the sequence is EQPTTSQPETTTPQ. The span at 651-663 shows a compositional bias: basic and acidic residues; it reads PYHEDAASGAEKT. Acidic residues predominate over residues 777–794; sequence EEVSSDSENIPEEGDGSE. 5 stretches are compositionally biased toward polar residues: residues 886–941, 1288–1299, 1332–1350, 1366–1376, and 1457–1469; these read KNQQ…QSDS, FKEQLSPRQLSQ, HSSQASDRSKFQPQMSSKG, PSSSPFQQQVH, and DGNNNQHANLSNQ. Residues 1502–1513 are compositionally biased toward low complexity; that stretch reads SVPSGPISSSVG. Positions 1542–1552 are enriched in basic and acidic residues; the sequence is QQSRPKSESMA.

Interacts with TOP2B.

The protein resides in the cytoplasmic vesicle. It is found in the secretory vesicle. It localises to the acrosome. The chain is Acrosomal protein KIAA1210 from Homo sapiens (Human).